Consider the following 469-residue polypeptide: Putative arginine/ornithine antiporter (469 aa).

12 consecutive transmembrane segments (helical) span residues Gly8–Leu28, Ala44–Ile64, Ala90–Ile110, Leu144–Ile164, Val179–Gly199, Ile213–Ile233, Ile254–Val274, Val301–Leu321, Ser347–Ile367, Phe375–Ile395, Asp417–Ala437, and Leu439–Val459.

Belongs to the amino acid-polyamine-organocation (APC) superfamily. Basic amino acid/polyamine antiporter (APA) (TC 2.A.3.2) family.

The protein resides in the cell membrane. It carries out the reaction L-ornithine(in) + L-arginine(out) = L-ornithine(out) + L-arginine(in). Catalyzes electroneutral exchange between L-arginine and L-ornithine. This is Putative arginine/ornithine antiporter (yvsH) from Bacillus subtilis (strain 168).